A 188-amino-acid chain; its full sequence is Crossover junction endodeoxyribonuclease RuvC (188 aa).

Residues Asp7, Glu68, and Asp141 contribute to the active site. Residues Asp7, Glu68, and Asp141 each coordinate Mg(2+).

This sequence belongs to the RuvC family. As to quaternary structure, homodimer which binds Holliday junction (HJ) DNA. The HJ becomes 2-fold symmetrical on binding to RuvC with unstacked arms; it has a different conformation from HJ DNA in complex with RuvA. In the full resolvosome a probable DNA-RuvA(4)-RuvB(12)-RuvC(2) complex forms which resolves the HJ. Requires Mg(2+) as cofactor.

It localises to the cytoplasm. It catalyses the reaction Endonucleolytic cleavage at a junction such as a reciprocal single-stranded crossover between two homologous DNA duplexes (Holliday junction).. Functionally, the RuvA-RuvB-RuvC complex processes Holliday junction (HJ) DNA during genetic recombination and DNA repair. Endonuclease that resolves HJ intermediates. Cleaves cruciform DNA by making single-stranded nicks across the HJ at symmetrical positions within the homologous arms, yielding a 5'-phosphate and a 3'-hydroxyl group; requires a central core of homology in the junction. The consensus cleavage sequence is 5'-(A/T)TT(C/G)-3'. Cleavage occurs on the 3'-side of the TT dinucleotide at the point of strand exchange. HJ branch migration catalyzed by RuvA-RuvB allows RuvC to scan DNA until it finds its consensus sequence, where it cleaves and resolves the cruciform DNA. The chain is Crossover junction endodeoxyribonuclease RuvC from Mycobacterium leprae (strain TN).